A 375-amino-acid polypeptide reads, in one-letter code: Actin (375 aa).

It belongs to the actin family.

The protein resides in the cytoplasm. It is found in the cytoskeleton. It carries out the reaction ATP + H2O = ADP + phosphate + H(+). Functionally, actins are highly conserved proteins that are involved in various types of cell motility and are ubiquitously expressed in all eukaryotic cells. The polypeptide is Actin (Sterkiella cavicola (Ciliate)).